The following is a 1080-amino-acid chain: Carbamoyl phosphate synthase large chain (1080 aa).

Residues 1-403 (MPKRTDLRTI…SLQKAVRGLE (403 aa)) are carboxyphosphate synthetic domain. 12 residues coordinate ATP: Arg-129, Arg-169, Gly-175, Gly-176, Glu-208, Val-210, Glu-215, Gly-241, Val-242, His-243, Gln-285, and Glu-299. The 196-residue stretch at 133–328 (RVAMQEIGLE…IAKIAAKLAV (196 aa)) folds into the ATP-grasp 1 domain. The Mg(2+) site is built by Gln-285, Glu-299, and Asn-301. Mn(2+) contacts are provided by Gln-285, Glu-299, and Asn-301. Residues 404 to 554 (TGKVGLEPTG…YSTYEEECEA (151 aa)) are oligomerization domain. Positions 555–942 (APSDRRKIMI…AFARAQEAGD (388 aa)) are carbamoyl phosphate synthetic domain. One can recognise an ATP-grasp 2 domain in the interval 679 to 876 (QRLVQQLGLR…LAKIAARCMT (198 aa)). ATP contacts are provided by Arg-715, Arg-754, Leu-756, Glu-761, Gly-787, Val-788, His-789, Ser-790, Gln-830, and Glu-847. Mg(2+) contacts are provided by Gln-830, Glu-847, and Asn-849. Residues Gln-830, Glu-847, and Asn-849 each contribute to the Mn(2+) site. An MGS-like domain is found at 943–1080 (IRAPQPGRAF…LQELHKELQV (138 aa)). Positions 943 to 1080 (IRAPQPGRAF…LQELHKELQV (138 aa)) are allosteric domain.

Belongs to the CarB family. Composed of two chains; the small (or glutamine) chain promotes the hydrolysis of glutamine to ammonia, which is used by the large (or ammonia) chain to synthesize carbamoyl phosphate. Tetramer of heterodimers (alpha,beta)4. It depends on Mg(2+) as a cofactor. Mn(2+) serves as cofactor.

It catalyses the reaction hydrogencarbonate + L-glutamine + 2 ATP + H2O = carbamoyl phosphate + L-glutamate + 2 ADP + phosphate + 2 H(+). It carries out the reaction hydrogencarbonate + NH4(+) + 2 ATP = carbamoyl phosphate + 2 ADP + phosphate + 2 H(+). It participates in amino-acid biosynthesis; L-arginine biosynthesis; carbamoyl phosphate from bicarbonate: step 1/1. It functions in the pathway pyrimidine metabolism; UMP biosynthesis via de novo pathway; (S)-dihydroorotate from bicarbonate: step 1/3. Functionally, large subunit of the glutamine-dependent carbamoyl phosphate synthetase (CPSase). CPSase catalyzes the formation of carbamoyl phosphate from the ammonia moiety of glutamine, carbonate, and phosphate donated by ATP, constituting the first step of 2 biosynthetic pathways, one leading to arginine and/or urea and the other to pyrimidine nucleotides. The large subunit (synthetase) binds the substrates ammonia (free or transferred from glutamine from the small subunit), hydrogencarbonate and ATP and carries out an ATP-coupled ligase reaction, activating hydrogencarbonate by forming carboxy phosphate which reacts with ammonia to form carbamoyl phosphate. In Xylella fastidiosa (strain Temecula1 / ATCC 700964), this protein is Carbamoyl phosphate synthase large chain.